We begin with the raw amino-acid sequence, 541 residues long: Atlastin-3 (541 aa).

Positions 1–25 (MLSPQRVAAAASRGADDAMESSKPG) are N-terminal hypervariable region (HVR). The Cytoplasmic portion of the chain corresponds to 1-445 (MLSPQRVAAA…NVFSTFRTPA (445 aa)). The 249-residue stretch at 57–305 (DLDVVVVSVA…LIPYVLNPSK (249 aa)) folds into the GB1/RHD3-type G domain. Residues Arg70, Lys71, Gly72, Lys73, Ser74, Phe75, and Arg109 each contribute to the GDP site. Asp142 is a binding site for Mg(2+). GDP-binding residues include Arg213, Asp214, Val272, and Ser275. The tract at residues 343–434 (MLQATAEANN…YENFCKHNGS (92 aa)) is 3HB (three-helix bundle) domain. Lys391 is modified (N6-acetyllysine). A helical membrane pass occupies residues 446 to 466 (VLFTGIVALYIASGLTGFIGL). Glu467 is a topological domain (lumenal). A helical transmembrane segment spans residues 468–488 (VVAQLFNCMVGLLLIALLTWG). Topologically, residues 489 to 541 (YIRYSGQYRELGGAIDFGAAYVLEQASSHIGNSTQATVRDAVVGRPSMDKKAQ) are cytoplasmic. Position 535 is a phosphoserine (Ser535).

It belongs to the TRAFAC class dynamin-like GTPase superfamily. GB1/RHD3 GTPase family. GB1 subfamily. As to quaternary structure, monomeric and homodimeric. The homodimer, transiently formed by two molecules on opposing membranes, is the active form mediating ER membrane fusion. Interacts with ZFYVE27; both proteins are involved in endoplasmic reticulum tubular network organization. Interacts with REEP5; both proteins are involved in endoplasmic reticulum tubular network organization. In terms of tissue distribution, expressed in the central nervous system and in dorsal root ganglia neurons. Expressed in peripheral tissues (at protein level).

The protein localises to the endoplasmic reticulum membrane. The catalysed reaction is GTP + H2O = GDP + phosphate + H(+). Its function is as follows. Atlastin-3 (ATL3) is a membrane-anchored GTPase that mediates the GTP-dependent fusion of endoplasmic reticulum (ER) membranes, maintaining the continuous ER network. It facilitates the formation of three-way junctions where ER tubules intersect. Two atlastin-3 on neighboring ER tubules bind GTP and form loose homodimers through the GB1/RHD3-type G domains and 3HB regions. Upon GTP hydrolysis, the 3HB regions tighten, pulling the membranes together to drive their fusion. After fusion, the homodimer disassembles upon release of inorganic phosphate (Pi). Subsequently, GDP dissociates, resetting the monomers to a conformation ready for a new fusion cycle. This Homo sapiens (Human) protein is Atlastin-3.